Reading from the N-terminus, the 328-residue chain is Octanoyltransferase, mitochondrial (328 aa).

The 205-residue stretch at 108-312 (MKPNPIILTF…EMTKLLGIKT (205 aa)) folds into the BPL/LPL catalytic domain. Substrate is bound by residues 162-169 (RGGQVTFH), 241-243 (SVG), and 254-256 (GVA). Cys-272 functions as the Acyl-thioester intermediate in the catalytic mechanism.

It belongs to the LipB family.

It localises to the mitochondrion. The catalysed reaction is octanoyl-[ACP] + L-lysyl-[protein] = N(6)-octanoyl-L-lysyl-[protein] + holo-[ACP] + H(+). It participates in protein modification; protein lipoylation via endogenous pathway; protein N(6)-(lipoyl)lysine from octanoyl-[acyl-carrier-protein]: step 1/2. In terms of biological role, catalyzes the transfer of endogenously produced octanoic acid from octanoyl-acyl-carrier-protein onto the lipoyl domains of lipoate-dependent enzymes. Lipoyl-ACP can also act as a substrate although octanoyl-ACP is likely to be the physiological substrate. The sequence is that of Octanoyltransferase, mitochondrial (LIP2) from Saccharomyces cerevisiae (strain ATCC 204508 / S288c) (Baker's yeast).